A 619-amino-acid chain; its full sequence is CLPTM1-like membrane protein cnrB (619 aa).

Positions 1-21 are disordered; it reads MNNQGGAVAANGQRPQAQQQQ. Low complexity predominate over residues 9 to 21; sequence AANGQRPQAQQQQ. Helical transmembrane passes span 26–46, 324–344, 360–380, 384–404, 445–465, and 474–496; these read IMGI…ASFA, WILG…FLAF, LSVK…LYLL, TSYM…WKLG, YLSW…LYYH, and VVSS…QLFI. Residues 566 to 619 are disordered; that stretch reads SEEAEEVQQQDKKEIKEKVEEREEEKQEEEEEEKEKEEESTSSSKVTKRKTKKV. Residues 574–590 show a composition bias toward basic and acidic residues; the sequence is QQDKKEIKEKVEEREEE. The segment covering 591 to 605 has biased composition (acidic residues); that stretch reads KQEEEEEEKEKEEES.

Belongs to the CLPTM1 family.

It is found in the membrane. This chain is CLPTM1-like membrane protein cnrB (cnrB), found in Dictyostelium discoideum (Social amoeba).